A 314-amino-acid polypeptide reads, in one-letter code: 2-desacetyl-2-hydroxyethyl bacteriochlorophyllide A dehydrogenase (314 aa).

Its pathway is porphyrin-containing compound metabolism; bacteriochlorophyll biosynthesis (light-independent). In terms of biological role, this protein catalyzes the penultimate step in bacteriochlorophyll a biosynthesis. The polypeptide is 2-desacetyl-2-hydroxyethyl bacteriochlorophyllide A dehydrogenase (bchC) (Rhodobacter capsulatus (strain ATCC BAA-309 / NBRC 16581 / SB1003)).